Reading from the N-terminus, the 246-residue chain is NH(3)-dependent NAD(+) synthetase (246 aa).

Position 29 to 36 (29 to 36 (GLSGGIDS)) interacts with ATP. Mg(2+) is bound at residue aspartate 35. Arginine 110 lines the deamido-NAD(+) pocket. Threonine 130 serves as a coordination point for ATP. Glutamate 135 is a Mg(2+) binding site. ATP-binding residues include lysine 159 and serine 181.

This sequence belongs to the NAD synthetase family. In terms of assembly, homodimer.

It carries out the reaction deamido-NAD(+) + NH4(+) + ATP = AMP + diphosphate + NAD(+) + H(+). It functions in the pathway cofactor biosynthesis; NAD(+) biosynthesis; NAD(+) from deamido-NAD(+) (ammonia route): step 1/1. Functionally, catalyzes the ATP-dependent amidation of deamido-NAD to form NAD. Uses ammonia as a nitrogen source. In Campylobacter jejuni subsp. jejuni serotype O:2 (strain ATCC 700819 / NCTC 11168), this protein is NH(3)-dependent NAD(+) synthetase.